Consider the following 50-residue polypeptide: uncharacterized protein (50 aa).

The first 22 residues, 1–22 (MSKVAALGWGTLVYLGVGLLLA), serve as a signal peptide directing secretion.

This is an uncharacterized protein from Dictyostelium discoideum (Social amoeba).